Consider the following 664-residue polypeptide: Transketolase 1 (664 aa).

His-26 provides a ligand contact to substrate. Thiamine diphosphate is bound by residues His-66 and 114–116 (GPL). Asp-155 is a binding site for Mg(2+). Residues Gly-156 and Asn-185 each contribute to the thiamine diphosphate site. Asn-185 and Ile-187 together coordinate Mg(2+). His-260, Arg-357, and Ser-384 together coordinate substrate. His-260 provides a ligand contact to thiamine diphosphate. Glu-411 (proton donor) is an active-site residue. Thiamine diphosphate is bound at residue Phe-437. The substrate site is built by His-461, Asp-469, and Arg-520.

This sequence belongs to the transketolase family. In terms of assembly, homodimer. Mg(2+) serves as cofactor. The cofactor is Ca(2+). Requires Mn(2+) as cofactor. It depends on Co(2+) as a cofactor. Thiamine diphosphate is required as a cofactor.

It catalyses the reaction D-sedoheptulose 7-phosphate + D-glyceraldehyde 3-phosphate = aldehydo-D-ribose 5-phosphate + D-xylulose 5-phosphate. Catalyzes the transfer of a two-carbon ketol group from a ketose donor to an aldose acceptor, via a covalent intermediate with the cofactor thiamine pyrophosphate. The chain is Transketolase 1 (tkt1) from Aliivibrio fischeri (strain ATCC 700601 / ES114) (Vibrio fischeri).